The following is a 289-amino-acid chain: uncharacterized protein (289 aa).

This is an uncharacterized protein from Dictyostelium discoideum (Social amoeba).